The following is a 340-amino-acid chain: Glyceraldehyde-3-phosphate dehydrogenase 2 (340 aa).

Residues 12-13, Arg-78, and Thr-120 each bind NADP(+); that span reads RI. Residues 151–153 and Thr-182 contribute to the D-glyceraldehyde 3-phosphate site; that span reads SCT. Cys-152 serves as the catalytic Nucleophile. Asn-183 is a binding site for NADP(+). D-glyceraldehyde 3-phosphate-binding positions include Arg-197, 210–211, and Arg-233; that span reads TG. Asn-315 serves as a coordination point for NADP(+).

This sequence belongs to the glyceraldehyde-3-phosphate dehydrogenase family. In terms of assembly, homotetramer. Interacts with BrxC. In terms of processing, in response to oxidative stress, the active site Cys likely reacts with bacillithiol (BSH) to form mixed disulfides to protect the Cys residue against overoxidation. S-bacillithiolation presumably leads to loss of catalytic activity. Debacillithiolation by monothiol bacilliredoxin BrxC restores the activity.

It is found in the cytoplasm. It carries out the reaction D-glyceraldehyde 3-phosphate + phosphate + NADP(+) = (2R)-3-phospho-glyceroyl phosphate + NADPH + H(+). The enzyme catalyses D-glyceraldehyde 3-phosphate + phosphate + NAD(+) = (2R)-3-phospho-glyceroyl phosphate + NADH + H(+). It functions in the pathway carbohydrate biosynthesis; gluconeogenesis. Functionally, involved in the gluconeogenesis. Catalyzes the oxidative phosphorylation of glyceraldehyde 3-phosphate (G3P) to 1,3-bisphosphoglycerate (BPG) using the cofactor NADP. The first reaction step involves the formation of a hemiacetal intermediate between G3P and a cysteine residue, and this hemiacetal intermediate is then oxidized to a thioester, with concomitant reduction of NADP to NADPH. The reduced NADPH is then exchanged with the second NADP, and the thioester is attacked by a nucleophilic inorganic phosphate to produce BPG. The chain is Glyceraldehyde-3-phosphate dehydrogenase 2 from Bacillus subtilis (strain 168).